The following is a 121-amino-acid chain: Small ribosomal subunit protein uS13 (121 aa).

Residues 94 to 121 (GLPVRGQNTKNNARTRKGPRRTVANKKK) form a disordered region. Basic residues predominate over residues 106–121 (ARTRKGPRRTVANKKK).

It belongs to the universal ribosomal protein uS13 family. Part of the 30S ribosomal subunit. Forms a loose heterodimer with protein S19. Forms two bridges to the 50S subunit in the 70S ribosome.

In terms of biological role, located at the top of the head of the 30S subunit, it contacts several helices of the 16S rRNA. In the 70S ribosome it contacts the 23S rRNA (bridge B1a) and protein L5 of the 50S subunit (bridge B1b), connecting the 2 subunits; these bridges are implicated in subunit movement. Contacts the tRNAs in the A and P-sites. The sequence is that of Small ribosomal subunit protein uS13 from Geobacillus sp. (strain WCH70).